We begin with the raw amino-acid sequence, 58 residues long: Large ribosomal subunit protein uL30 (58 aa).

The protein belongs to the universal ribosomal protein uL30 family. Part of the 50S ribosomal subunit.

The sequence is that of Large ribosomal subunit protein uL30 from Pseudomonas entomophila (strain L48).